The sequence spans 681 residues: Potassium-transporting ATPase ATP-binding subunit (681 aa).

Transmembrane regions (helical) follow at residues 30 to 50 (LLVYVGAILATSLYFLGFFGI), 59 to 79 (LAIALILWFTVLFANFAEAIA), 216 to 236 (ILLVTLSIIFLAVSATLLPFT), and 255 to 275 (IALLVCLAPTTIGALLSSIGI). The 4-aspartylphosphate intermediate role is filled by Asp-306. Residues Asp-343, Glu-347, 376–383 (FTATTRMS), and Lys-394 contribute to the ATP site. Asp-517 and Asp-521 together coordinate Mg(2+). 3 helical membrane-spanning segments follow: residues 587-607 (FAIIPVLFYGIFPQLEALNLM), 615-635 (AILSAIIYNAVIIIILIPLSL), and 661-681 (LIAPFIAIKLIDMLLTVLGIV).

Belongs to the cation transport ATPase (P-type) (TC 3.A.3) family. Type IA subfamily. The system is composed of three essential subunits: KdpA, KdpB and KdpC.

It localises to the cell membrane. It catalyses the reaction K(+)(out) + ATP + H2O = K(+)(in) + ADP + phosphate + H(+). Functionally, part of the high-affinity ATP-driven potassium transport (or Kdp) system, which catalyzes the hydrolysis of ATP coupled with the electrogenic transport of potassium into the cytoplasm. This subunit is responsible for energy coupling to the transport system and for the release of the potassium ions to the cytoplasm. The sequence is that of Potassium-transporting ATPase ATP-binding subunit from Listeria monocytogenes serotype 4b (strain CLIP80459).